The sequence spans 184 residues: Probable RNA 2'-phosphotransferase (184 aa).

Belongs to the KptA/TPT1 family.

In terms of biological role, removes the 2'-phosphate from RNA via an intermediate in which the phosphate is ADP-ribosylated by NAD followed by a presumed transesterification to release the RNA and generate ADP-ribose 1''-2''-cyclic phosphate (APPR&gt;P). May function as an ADP-ribosylase. The protein is Probable RNA 2'-phosphotransferase of Shigella boydii serotype 18 (strain CDC 3083-94 / BS512).